A 274-amino-acid chain; its full sequence is Large ribosomal subunit protein uL2 (274 aa).

Residues 224–256 (AMNPIDHPHGGGEGRTGEGRHAVDPWGNLTKGY) form a disordered region. The span at 229–246 (DHPHGGGEGRTGEGRHAV) shows a compositional bias: basic and acidic residues.

Belongs to the universal ribosomal protein uL2 family. In terms of assembly, part of the 50S ribosomal subunit. Forms a bridge to the 30S subunit in the 70S ribosome.

Functionally, one of the primary rRNA binding proteins. Required for association of the 30S and 50S subunits to form the 70S ribosome, for tRNA binding and peptide bond formation. It has been suggested to have peptidyltransferase activity; this is somewhat controversial. Makes several contacts with the 16S rRNA in the 70S ribosome. The sequence is that of Large ribosomal subunit protein uL2 from Acidovorax ebreus (strain TPSY) (Diaphorobacter sp. (strain TPSY)).